Consider the following 160-residue polypeptide: SsrA-binding protein (160 aa).

Belongs to the SmpB family.

The protein localises to the cytoplasm. Required for rescue of stalled ribosomes mediated by trans-translation. Binds to transfer-messenger RNA (tmRNA), required for stable association of tmRNA with ribosomes. tmRNA and SmpB together mimic tRNA shape, replacing the anticodon stem-loop with SmpB. tmRNA is encoded by the ssrA gene; the 2 termini fold to resemble tRNA(Ala) and it encodes a 'tag peptide', a short internal open reading frame. During trans-translation Ala-aminoacylated tmRNA acts like a tRNA, entering the A-site of stalled ribosomes, displacing the stalled mRNA. The ribosome then switches to translate the ORF on the tmRNA; the nascent peptide is terminated with the 'tag peptide' encoded by the tmRNA and targeted for degradation. The ribosome is freed to recommence translation, which seems to be the essential function of trans-translation. This is SsrA-binding protein from Sodalis glossinidius (strain morsitans).